A 310-amino-acid chain; its full sequence is Bifunctional phosphoglucose/phosphomannose isomerase (310 aa).

Residues 22–152 (FDGSFRTGTF…IRPKHEDIEE (131 aa)) form the SIS domain. 6 residues coordinate D-fructose 6-phosphate: Gly41, Ser42, Ser80, Ser82, Thr85, and Arg128. Glu202 (proton acceptor) is an active-site residue. Residues His218 and Lys306 each coordinate D-fructose 6-phosphate. His218 serves as the catalytic Proton donor. The active-site Proton acceptor is Lys306.

This sequence belongs to the PGI/PMI family. In terms of assembly, homodimer.

The enzyme catalyses alpha-D-glucose 6-phosphate = beta-D-fructose 6-phosphate. It catalyses the reaction D-mannose 6-phosphate = D-fructose 6-phosphate. Its activity is regulated as follows. Inhibited by low concentrations of erythrose 4-phosphate and 6-phosphogluconate. In terms of biological role, dual specificity isomerase that catalyzes the isomerization of both glucose-6-phosphate and mannose-6-phosphate to fructose-6-phosphate with similar catalytic efficiency. The protein is Bifunctional phosphoglucose/phosphomannose isomerase of Thermoplasma acidophilum (strain ATCC 25905 / DSM 1728 / JCM 9062 / NBRC 15155 / AMRC-C165).